Here is a 31-residue protein sequence, read N- to C-terminus: Cycloviolacin-O19 (31 aa).

The segment at residues 1–31 is a cross-link (cyclopeptide (Gly-Asp)); sequence GTLPCGESCVWIPCISSVVGCSCKSKVCYKD. Cystine bridges form between Cys5–Cys21, Cys9–Cys23, and Cys14–Cys28.

In terms of processing, this is a cyclic peptide. In terms of tissue distribution, expressed in petioles and runners but not in leaves, petals and roots (at protein level).

Functionally, probably participates in a plant defense mechanism. This chain is Cycloviolacin-O19, found in Viola odorata (Sweet violet).